The chain runs to 336 residues: MRPILLAGHERSLNQIKFNRDGDLLFSVAKDKIVCAWWSANGERLGTYSGHLGAIWTVDVSPNTVLLATGSADNSVRLWNVKTGECVKVWEFPTAVKRVEFSPDGSKVLAVTEKRMGFLGTIAVLDINYDGDFTNQAEEPSLRITCTESKATVAGWSYLGKYIIAGHEDGSVSQYDAKTGEQLENVQAHEFDHQINDLQFSPDRTHFLTASKDKSAKLMSSRNLAILKTYVADTPLNSAAITPKKEYVILGGGQAAMDVTTTSARQGKFEARFYHKVFEDEIGRVKGHFGPLNTIHVHPAGTAYASGGEDGYVRVHHFDKPYFDFMYEVEREQLRR.

WD repeat units lie at residues 8-47, 50-91, 146-185, 190-229, and 287-326; these read GHERSLNQIKFNRDGDLLFSVAKDKIVCAWWSANGERLGT, GHLG…KVWE, CTESKATVAGWSYLGKYIIAGHEDGSVSQYDAKTGEQLEN, EFDHQINDLQFSPDRTHFLTASKDKSAKLMSSRNLAILKT, and GHFGPLNTIHVHPAGTAYASGGEDGYVRVHHFDKPYFDFM.

The protein belongs to the eIF-3 subunit I family. In terms of assembly, component of the eukaryotic translation initiation factor 3 (eIF-3) complex.

The protein localises to the cytoplasm. Its function is as follows. Component of the eukaryotic translation initiation factor 3 (eIF-3) complex, which is involved in protein synthesis of a specialized repertoire of mRNAs and, together with other initiation factors, stimulates binding of mRNA and methionyl-tRNAi to the 40S ribosome. The eIF-3 complex specifically targets and initiates translation of a subset of mRNAs involved in cell proliferation. The polypeptide is Eukaryotic translation initiation factor 3 subunit I (tif34) (Emericella nidulans (strain FGSC A4 / ATCC 38163 / CBS 112.46 / NRRL 194 / M139) (Aspergillus nidulans)).